A 331-amino-acid chain; its full sequence is Holliday junction branch migration complex subunit RuvB (331 aa).

Residues 1-182 (MSSDTLHKYE…FGIPLHLEFY (182 aa)) are large ATPase domain (RuvB-L). Residues L21, R22, G63, K66, T67, T68, 129 to 131 (EDY), R172, Y182, and R219 each bind ATP. Residue T67 coordinates Mg(2+). The tract at residues 183-254 (SVDELVLVIK…FANSALFRLG (72 aa)) is small ATPAse domain (RuvB-S). The interval 257–331 (GAGFDKMDLK…FEYLLSSKYI (75 aa)) is head domain (RuvB-H). Residues R310 and R315 each coordinate DNA.

This sequence belongs to the RuvB family. As to quaternary structure, homohexamer. Forms an RuvA(8)-RuvB(12)-Holliday junction (HJ) complex. HJ DNA is sandwiched between 2 RuvA tetramers; dsDNA enters through RuvA and exits via RuvB. An RuvB hexamer assembles on each DNA strand where it exits the tetramer. Each RuvB hexamer is contacted by two RuvA subunits (via domain III) on 2 adjacent RuvB subunits; this complex drives branch migration. In the full resolvosome a probable DNA-RuvA(4)-RuvB(12)-RuvC(2) complex forms which resolves the HJ.

It is found in the cytoplasm. It catalyses the reaction ATP + H2O = ADP + phosphate + H(+). Its function is as follows. The RuvA-RuvB-RuvC complex processes Holliday junction (HJ) DNA during genetic recombination and DNA repair, while the RuvA-RuvB complex plays an important role in the rescue of blocked DNA replication forks via replication fork reversal (RFR). RuvA specifically binds to HJ cruciform DNA, conferring on it an open structure. The RuvB hexamer acts as an ATP-dependent pump, pulling dsDNA into and through the RuvAB complex. RuvB forms 2 homohexamers on either side of HJ DNA bound by 1 or 2 RuvA tetramers; 4 subunits per hexamer contact DNA at a time. Coordinated motions by a converter formed by DNA-disengaged RuvB subunits stimulates ATP hydrolysis and nucleotide exchange. Immobilization of the converter enables RuvB to convert the ATP-contained energy into a lever motion, pulling 2 nucleotides of DNA out of the RuvA tetramer per ATP hydrolyzed, thus driving DNA branch migration. The RuvB motors rotate together with the DNA substrate, which together with the progressing nucleotide cycle form the mechanistic basis for DNA recombination by continuous HJ branch migration. Branch migration allows RuvC to scan DNA until it finds its consensus sequence, where it cleaves and resolves cruciform DNA. This chain is Holliday junction branch migration complex subunit RuvB, found in Anaplasma marginale (strain St. Maries).